A 59-amino-acid polypeptide reads, in one-letter code: VGVRSYYMKYIIVGFTLPRPHNPPAFILSFRPKRINTGSYPPIQNCKFLIADGSRKVFT.

Its subcellular location is the mitochondrion. This is an uncharacterized protein from Ascobolus immersus.